Consider the following 128-residue polypeptide: Large ribosomal subunit protein bL12 (128 aa).

Belongs to the bacterial ribosomal protein bL12 family. Homodimer. Part of the ribosomal stalk of the 50S ribosomal subunit. Forms a multimeric L10(L12)X complex, where L10 forms an elongated spine to which 2 to 4 L12 dimers bind in a sequential fashion. Binds GTP-bound translation factors.

Functionally, forms part of the ribosomal stalk which helps the ribosome interact with GTP-bound translation factors. Is thus essential for accurate translation. This is Large ribosomal subunit protein bL12 from Kocuria rhizophila (strain ATCC 9341 / DSM 348 / NBRC 103217 / DC2201).